We begin with the raw amino-acid sequence, 234 residues long: Accessory gland protein Acp29AB (234 aa).

A signal peptide spans 1–21 (MYASNLLYLLALWNLWDLSGG). Asparagine 61 and asparagine 164 each carry an N-linked (GlcNAc...) asparagine glycan. The region spanning 137-234 (VTCRKMNGHL…SFVCQADQWA (98 aa)) is the C-type lectin domain. 2 disulfides stabilise this stretch: cysteine 139–cysteine 228 and cysteine 207–cysteine 220.

In terms of tissue distribution, main cells of the accessory gland and in seminal fluid.

It localises to the secreted. Functionally, responsible for physiological and behavioral changes in mated female flies. The protein is Accessory gland protein Acp29AB (Acp29AB) of Drosophila melanogaster (Fruit fly).